A 1608-amino-acid polypeptide reads, in one-letter code: DNA-directed RNA polymerase III subunit rpc2 (1608 aa).

Zn(2+) contacts are provided by cysteine 1557, cysteine 1560, cysteine 1569, and cysteine 1572. The C4-type zinc finger occupies 1557–1572 (CKNCGFLGYEGYCQYC).

This sequence belongs to the RNA polymerase beta chain family. In terms of assembly, component of the RNA polymerase III (Pol III) complex. In terms of processing, this protein undergoes a protein self splicing that involves a post-translational excision of the intervening region (intein) followed by peptide ligation.

The protein resides in the nucleus. It catalyses the reaction RNA(n) + a ribonucleoside 5'-triphosphate = RNA(n+1) + diphosphate. Its function is as follows. DNA-dependent RNA polymerase catalyzes the transcription of DNA into RNA using the four ribonucleoside triphosphates as substrates. Second largest core component of RNA polymerase III which synthesizes small RNAs, such as 5S rRNA and tRNAs. Proposed to contribute to the polymerase catalytic activity and forms the polymerase active center together with the largest subunit. Pol III is composed of mobile elements and rpc2 is part of the core element with the central large cleft and probably a clamp element that moves to open and close the cleft. This Dictyostelium discoideum (Social amoeba) protein is DNA-directed RNA polymerase III subunit rpc2 (polr3b).